The primary structure comprises 598 residues: Beta-fructofuranosidase, insoluble isoenzyme 2 (598 aa).

The signal sequence occupies residues 1 to 25 (MGVLGSRVAWAWLVQLLLLQQLAGA). Residue aspartate 69 is part of the active site. 3 N-linked (GlcNAc...) asparagine glycosylation sites follow: asparagine 164, asparagine 189, and asparagine 348.

It belongs to the glycosyl hydrolase 32 family.

The protein resides in the secreted. It localises to the extracellular space. The protein localises to the apoplast. It is found in the cell wall. The enzyme catalyses Hydrolysis of terminal non-reducing beta-D-fructofuranoside residues in beta-D-fructofuranosides.. In terms of biological role, may play a role in sucrose partitioning during seed development. This Oryza sativa subsp. indica (Rice) protein is Beta-fructofuranosidase, insoluble isoenzyme 2 (CIN2).